The sequence spans 659 residues: Cytochrome bo(3) ubiquinol oxidase subunit 1 (659 aa).

Topologically, residues 1-14 are extracellular; it reads MFGKLTLKAIPVDE. A helical transmembrane segment spans residues 15–35; the sequence is PIIMVTYISIILIALFISFSI. The Cytoplasmic segment spans residues 36–58; it reads TYFKKWKYLWYEWFTTVDHKKIS. Residues 59–79 form a helical membrane-spanning segment; it reads IMYGILAFIMLFRGFVDAILM. A ubiquinone is bound by residues arginine 71, aspartate 75, and histidine 98. At 80 to 106 the chain is on the extracellular side; it reads RTQQVIASSGNTGFLPPHHYDQIFTAH. Residue histidine 106 participates in heme b binding. The helical transmembrane segment at 107–127 threads the bilayer; it reads GVIMIFFVAMPLVIGLMNLVV. The Cytoplasmic portion of the chain corresponds to 128–145; that stretch reads PLQIGARDVAFPFLNNLS. The chain crosses the membrane as a helical span at residues 146–166; sequence FWLNVSGAILLTLSLGIGEFA. The Extracellular portion of the chain corresponds to 167-189; that stretch reads QTGWLAYPPLSEVKYSPGVGVDY. Tryptophan 170 provides a ligand contact to heme b. The chain crosses the membrane as a helical span at residues 190–210; it reads WIWSLQISGVGTTLTGINFLI. Residues 211–225 are Cytoplasmic-facing; that stretch reads TILKMRAPGMCFFKM. Residues 226 to 246 traverse the membrane as a helical segment; sequence PVFTWAALCTNILIVISFPVL. Topologically, residues 247-277 are extracellular; the sequence is TTTLLLLTLDRCFDFHFFTNNFGGNPMMYVN. Residues 278-298 form a helical membrane-spanning segment; the sequence is LIWIWGHPEVYILVLPVFGVF. A Cu(2+)-binding site is contributed by histidine 284. Residues 284–288 constitute a cross-link (1'-histidyl-3'-tyrosine (His-Tyr)); that stretch reads HPEVY. Fe(II)-heme o is bound at residue tyrosine 288. Topologically, residues 299–309 are cytoplasmic; sequence SEVVATFSKKR. Residues 310–330 traverse the membrane as a helical segment; it reads LFGYVSLVWATLAITILSFIV. The Extracellular segment spans residues 331-347; the sequence is WLHHFFTMGAGSNVNAF. Cu(2+) contacts are provided by histidine 333 and histidine 334. A helical membrane pass occupies residues 348 to 368; the sequence is FGITTMIIAIPTGVKIFNWLF. Over 369–380 the chain is Cytoplasmic; that stretch reads TMYQGRVHMHSS. A helical membrane pass occupies residues 381 to 401; sequence MLWTIGFLITFSIGGMTGVLL. Residues 402-413 are Extracellular-facing; the sequence is SIPPADFILHNS. Fe(II)-heme o-binding residues include histidine 411 and histidine 419. Residues 414-434 form a helical membrane-spanning segment; that stretch reads LFLVAHFHNVIIGGVVFGCFA. Histidine 421 lines the heme b pocket. Topologically, residues 435–456 are cytoplasmic; it reads GINYWFPKLFGFILNELWGKRA. A helical membrane pass occupies residues 457–477; it reads FWFWIIGFFTAFMPLYFLGFM. Residues 478–490 are Extracellular-facing; the sequence is GMTRRLSQNIDIE. Residues arginine 481 and arginine 482 each coordinate heme b. A helical transmembrane segment spans residues 491-511; that stretch reads FHFLLSIAAIGAILIGIGILC. At 512 to 580 the chain is on the cytoplasmic side; the sequence is QIIQFWVSVR…KNQVQKKQYS (69 aa). The helical transmembrane segment at 581–601 threads the bilayer; sequence AIHMPKNTGLGIFISFFSLLF. Topologically, residues 602-605 are extracellular; that stretch reads GFSA. Residues 606–626 traverse the membrane as a helical segment; it reads VWNIIWLSFLSFLVVIISLIF. Topologically, residues 627–659 are cytoplasmic; that stretch reads KSIDENTEYTVSVKEIESIENRHLENVQKAGLK.

Belongs to the heme-copper respiratory oxidase family. As to quaternary structure, the cytochrome bo(3) ubiquinol oxidase complex is a heterooctamer of two A chains, two B chains, two C chains and two D chains. Cu(2+) is required as a cofactor. The cofactor is heme b. Fe(II)-heme o serves as cofactor.

It localises to the cell membrane. It catalyses the reaction 2 a ubiquinol + O2 + n H(+)(in) = 2 a ubiquinone + 2 H2O + n H(+)(out). Its function is as follows. Cytochrome bo(3) ubiquinol oxidase is the terminal enzyme in the aerobic respiratory chain. Catalyzes the four-electron reduction of O2 to water, using a ubiquinol as a membrane soluble electron donor for molecular oxygen reduction. Has proton pump activity across the membrane in addition to electron transfer, pumping 2 protons/electron and generating a proton motive force. All the redox centers of this enzyme complex are located within the largest subunit, subunit I. Protons are probably pumped via D- and K- channels found in this subunit. This Buchnera aphidicola subsp. Schizaphis graminum (strain Sg) protein is Cytochrome bo(3) ubiquinol oxidase subunit 1 (cyoB).